The following is a 396-amino-acid chain: MAGSSPRQVAVFGATGSIGTSALDVIARHPERLRASVLSAGSKVDELLALCATHRPAHALIADATLYPALRDGLRARGLATQAHAGAEALDALASSDACDTVVAAIVGAAGLPSTLAAARAGKRLLLANKESLVLAGELLTRTAAAAGAEIIPIDSEHSAIFQCLRSCDASRGVRRVILTASGGPFRGRDRAALAAVTPAQAVAHPKWSMGPKISVDSATLMNKGLEVIEAHHLFGLPGEQIDVLVHPQSLVHSLVEFVDGSTLAQLGLPDMRTTLAVGLAWPERVESGVGGLDLLSQGRLDFEAPDTAAFPCLRLAWDALRAGGTAPAILNAANEVAVSAFLQGQVGFLAIPALVEHTLTTLQRHNADSLDTLLFADAQARQITERALAHHALHA.

Residues Thr15, Gly16, Ser17, Ile18, Gly41, and Asn129 each coordinate NADPH. Lys130 contacts 1-deoxy-D-xylulose 5-phosphate. Position 131 (Glu131) interacts with NADPH. Asp155 lines the Mn(2+) pocket. Residues Ser156, Glu157, Ser182, and His205 each contribute to the 1-deoxy-D-xylulose 5-phosphate site. Glu157 provides a ligand contact to Mn(2+). NADPH is bound at residue Gly211. Residues Ser218, Asn223, Lys224, and Glu227 each contribute to the 1-deoxy-D-xylulose 5-phosphate site. Glu227 contacts Mn(2+).

This sequence belongs to the DXR family. The cofactor is Mg(2+). Requires Mn(2+) as cofactor.

It catalyses the reaction 2-C-methyl-D-erythritol 4-phosphate + NADP(+) = 1-deoxy-D-xylulose 5-phosphate + NADPH + H(+). Its pathway is isoprenoid biosynthesis; isopentenyl diphosphate biosynthesis via DXP pathway; isopentenyl diphosphate from 1-deoxy-D-xylulose 5-phosphate: step 1/6. In terms of biological role, catalyzes the NADPH-dependent rearrangement and reduction of 1-deoxy-D-xylulose-5-phosphate (DXP) to 2-C-methyl-D-erythritol 4-phosphate (MEP). The protein is 1-deoxy-D-xylulose 5-phosphate reductoisomerase of Xanthomonas axonopodis pv. citri (strain 306).